A 154-amino-acid chain; its full sequence is Large ribosomal subunit protein uL13 (154 aa).

The protein belongs to the universal ribosomal protein uL13 family. In terms of assembly, part of the 50S ribosomal subunit.

This protein is one of the early assembly proteins of the 50S ribosomal subunit, although it is not seen to bind rRNA by itself. It is important during the early stages of 50S assembly. The polypeptide is Large ribosomal subunit protein uL13 (Rhizobium etli (strain CIAT 652)).